We begin with the raw amino-acid sequence, 144 residues long: Macromomycin (144 aa).

Residues 1 to 32 form the signal peptide; sequence MLQNTSRFLARAGATVGVAAGLAFSLPADRDG. Intrachain disulfides connect cysteine 68–cysteine 78 and cysteine 120–cysteine 125.

The protein belongs to the neocarzinostatin family.

Its function is as follows. Binds non-covalently to a chromophore which is the cytotoxic and mutagenic component of the antibiotic. The chromophore binds to DNA as a weak intercalator and causes single- and double-strand breaks. This is Macromomycin from Streptomyces macromomyceticus.